The primary structure comprises 284 residues: D-tagatose-1,6-bisphosphate aldolase subunit GatY (284 aa).

Asp82 (proton donor) is an active-site residue. Positions 83 and 180 each coordinate Zn(2+). Gly181 is a dihydroxyacetone phosphate binding site. His208 contacts Zn(2+). Residues 209–211 (GAS) and 230–233 (NVAT) contribute to the dihydroxyacetone phosphate site.

This sequence belongs to the class II fructose-bisphosphate aldolase family. TagBP aldolase GatY subfamily. As to quaternary structure, forms a complex with GatZ. Requires Zn(2+) as cofactor.

It carries out the reaction D-tagatofuranose 1,6-bisphosphate = D-glyceraldehyde 3-phosphate + dihydroxyacetone phosphate. The protein operates within carbohydrate metabolism; D-tagatose 6-phosphate degradation; D-glyceraldehyde 3-phosphate and glycerone phosphate from D-tagatose 6-phosphate: step 2/2. Functionally, catalytic subunit of the tagatose-1,6-bisphosphate aldolase GatYZ, which catalyzes the reversible aldol condensation of dihydroxyacetone phosphate (DHAP or glycerone-phosphate) with glyceraldehyde 3-phosphate (G3P) to produce tagatose 1,6-bisphosphate (TBP). Requires GatZ subunit for full activity and stability. Is involved in the catabolism of galactitol. The sequence is that of D-tagatose-1,6-bisphosphate aldolase subunit GatY from Shigella flexneri serotype 5b (strain 8401).